A 238-amino-acid chain; its full sequence is Ribonuclease Rh (238 aa).

The signal sequence occupies residues methionine 1–alanine 16. Intrachain disulfides connect cysteine 19-cysteine 36, cysteine 26-cysteine 69, cysteine 35-cysteine 136, cysteine 79-cysteine 128, and cysteine 198-cysteine 229. Catalysis depends on residues histidine 62, glutamate 121, and histidine 125.

It belongs to the RNase T2 family.

It carries out the reaction a ribonucleotidyl-ribonucleotide-RNA + H2O = a 3'-end 3'-phospho-ribonucleotide-RNA + a 5'-end dephospho-ribonucleoside-RNA + H(+). In terms of biological role, this is a base non-specific ribonuclease. This chain is Ribonuclease Rh, found in Rhizopus niveus.